Consider the following 93-residue polypeptide: Small ribosomal subunit protein uS19 (93 aa).

The protein belongs to the universal ribosomal protein uS19 family.

Protein S19 forms a complex with S13 that binds strongly to the 16S ribosomal RNA. The polypeptide is Small ribosomal subunit protein uS19 (Anaplasma marginale (strain Florida)).